The chain runs to 555 residues: Carboxypeptidase Y homolog A (555 aa).

Residues 1-17 form the signal peptide; it reads MRGLATTLLIGAAAAAT. Positions 18–136 are excised as a propeptide; that stretch reads YPAQQVLKAP…RLETFDLRVK (119 aa). 5 disulfides stabilise this stretch: C191-C430, C325-C339, C349-C372, C356-C365, and C394-C400. N-linked (GlcNAc...) asparagine glycosylation is present at N222. Residue S278 is part of the active site. D469 is a catalytic residue. N-linked (GlcNAc...) asparagine glycosylation is present at N520. The active site involves H531.

It belongs to the peptidase S10 family.

The protein localises to the vacuole. It catalyses the reaction Release of a C-terminal amino acid with broad specificity.. In terms of biological role, vacuolar carboxypeptidase involved in degradation of small peptides. Digests preferentially peptides containing an aliphatic or hydrophobic residue in P1' position, as well as methionine, leucine or phenylalanine in P1 position of ester substrate. The chain is Carboxypeptidase Y homolog A (cpyA) from Talaromyces marneffei (strain ATCC 18224 / CBS 334.59 / QM 7333) (Penicillium marneffei).